The chain runs to 189 residues: Large ribosomal subunit protein eL20 (189 aa).

It belongs to the eukaryotic ribosomal protein eL20 family.

Its subcellular location is the cytoplasm. This is Large ribosomal subunit protein eL20 (RPL18A) from Tetrahymena thermophila.